Reading from the N-terminus, the 206-residue chain is Small ribosomal subunit protein uS4 (206 aa).

An S4 RNA-binding domain is found at 96 to 156; it reads SRLDNVVYRM…NKSKNQSRIK (61 aa).

It belongs to the universal ribosomal protein uS4 family. Part of the 30S ribosomal subunit. Contacts protein S5. The interaction surface between S4 and S5 is involved in control of translational fidelity.

Its function is as follows. One of the primary rRNA binding proteins, it binds directly to 16S rRNA where it nucleates assembly of the body of the 30S subunit. Functionally, with S5 and S12 plays an important role in translational accuracy. The sequence is that of Small ribosomal subunit protein uS4 from Buchnera aphidicola subsp. Acyrthosiphon pisum (strain 5A).